The chain runs to 683 residues: Patellin-2 (683 aa).

Positions M1–P23 are disordered. Position 2 is an N-acetylalanine (A2). S79 carries the post-translational modification Phosphoserine. The stretch at L86–A163 forms a coiled coil. The interval K111–T279 is disordered. Over residues V124–S161 the composition is skewed to basic and acidic residues. The span at P232 to T243 shows a compositional bias: low complexity. Residues E244 to A275 show a composition bias toward basic and acidic residues. K394 participates in a covalent cross-link: Glycyl lysine isopeptide (Lys-Gly) (interchain with G-Cter in ubiquitin). A CRAL-TRIO domain is found at E404–P576. In terms of domain architecture, GOLD spans E580–T681.

Belongs to the patellin family. In terms of assembly, interacts with the deubiquitinating enzyme AMSH3.

The protein resides in the membrane. It is found in the cytoplasm. Functionally, carrier protein that may be involved in membrane-trafficking events associated with cell plate formation during cytokinesis. Binds to some hydrophobic molecules such as phosphoinositides and promotes their transfer between the different cellular sites. The polypeptide is Patellin-2 (PATL2) (Arabidopsis thaliana (Mouse-ear cress)).